The chain runs to 576 residues: Arginine--tRNA ligase (576 aa).

The 'HIGH' region signature appears at 123–133; sequence PNIGKEMHVGH.

It belongs to the class-I aminoacyl-tRNA synthetase family. Monomer.

It is found in the cytoplasm. It catalyses the reaction tRNA(Arg) + L-arginine + ATP = L-arginyl-tRNA(Arg) + AMP + diphosphate. This is Arginine--tRNA ligase from Wigglesworthia glossinidia brevipalpis.